The following is a 285-amino-acid chain: Bifunctional protein FolD (285 aa).

NADP(+) is bound by residues 169-171 (GRS), Ser-194, and Ile-235.

Belongs to the tetrahydrofolate dehydrogenase/cyclohydrolase family. As to quaternary structure, homodimer.

The catalysed reaction is (6R)-5,10-methylene-5,6,7,8-tetrahydrofolate + NADP(+) = (6R)-5,10-methenyltetrahydrofolate + NADPH. The enzyme catalyses (6R)-5,10-methenyltetrahydrofolate + H2O = (6R)-10-formyltetrahydrofolate + H(+). Its pathway is one-carbon metabolism; tetrahydrofolate interconversion. In terms of biological role, catalyzes the oxidation of 5,10-methylenetetrahydrofolate to 5,10-methenyltetrahydrofolate and then the hydrolysis of 5,10-methenyltetrahydrofolate to 10-formyltetrahydrofolate. This Microcystis aeruginosa (strain NIES-843 / IAM M-2473) protein is Bifunctional protein FolD.